The following is a 283-amino-acid chain: MQVFHHIRSLREALAAERRAGKRIGFVPTMGNLHDAHIELVRIAQRNCDVVVTSIFVNPLQFGLNEDWDKYPRTLAADSAKLEAVHCDYLFCPDETEIYPNGMAEQTRVIVPTMIDVLCGASRPGHFEGVTTVVTKLFNIVQPDEAVFGVKDFQQLAVIRRMVQDLCIPVKIVAGDIVREPDGLAMSSRNGFITADERPHVAVLNRVLNGIKQQIEQGSRDFGTLAAEARAHIDAAGFRVDYVSICNSRTLEMAAHDDREITILGAMYTSGARLIDNVSVVLA.

30–37 contributes to the ATP binding site; the sequence is MGNLHDAH. The active-site Proton donor is His37. Residue Gln61 coordinates (R)-pantoate. Residue Gln61 participates in beta-alanine binding. Residue 149–152 coordinates ATP; sequence GVKD. Residue Gln155 coordinates (R)-pantoate. ATP contacts are provided by residues Val178 and 186-189; that span reads MSSR.

The protein belongs to the pantothenate synthetase family. As to quaternary structure, homodimer.

Its subcellular location is the cytoplasm. It catalyses the reaction (R)-pantoate + beta-alanine + ATP = (R)-pantothenate + AMP + diphosphate + H(+). It functions in the pathway cofactor biosynthesis; (R)-pantothenate biosynthesis; (R)-pantothenate from (R)-pantoate and beta-alanine: step 1/1. In terms of biological role, catalyzes the condensation of pantoate with beta-alanine in an ATP-dependent reaction via a pantoyl-adenylate intermediate. The protein is Pantothenate synthetase of Cellvibrio japonicus (strain Ueda107) (Pseudomonas fluorescens subsp. cellulosa).